Reading from the N-terminus, the 233-residue chain is MKIDVLTIFPGMFKGPLTESLIGKAIEKEILKINIIDIRSFSKDKHKKVDDKSFGGGCGMVMKLEPLYDAIKSTGVKKKNSTYKNPYTKPYVIYMSPQGRILSDSIVKNLAKFKQLVIICGHYEGVDERTMNYVDEEISIGDYILTGGEIPAMVLIDSTARMLTGVVKEKSSVKNDSFYNNLLDYPHYTRPAVFKGYKIPEVLLSGDHKKISEWRVQESYKRTKERRPDLLKK.

Residues Gly121 and 140–145 (IGDYIL) each bind S-adenosyl-L-methionine.

The protein belongs to the RNA methyltransferase TrmD family. As to quaternary structure, homodimer.

Its subcellular location is the cytoplasm. The enzyme catalyses guanosine(37) in tRNA + S-adenosyl-L-methionine = N(1)-methylguanosine(37) in tRNA + S-adenosyl-L-homocysteine + H(+). Functionally, specifically methylates guanosine-37 in various tRNAs. In Endomicrobium trichonymphae, this protein is tRNA (guanine-N(1)-)-methyltransferase.